The sequence spans 213 residues: dITP/XTP pyrophosphatase (213 aa).

17–22 (SNNAGK) lines the substrate pocket. Mg(2+)-binding residues include glutamate 49 and aspartate 78. Catalysis depends on aspartate 78, which acts as the Proton acceptor. Substrate-binding positions include serine 79, 164–167 (FGYD), lysine 187, and 192–193 (HR).

It belongs to the HAM1 NTPase family. In terms of assembly, homodimer. Mg(2+) is required as a cofactor.

It carries out the reaction XTP + H2O = XMP + diphosphate + H(+). The enzyme catalyses dITP + H2O = dIMP + diphosphate + H(+). It catalyses the reaction ITP + H2O = IMP + diphosphate + H(+). Its function is as follows. Pyrophosphatase that catalyzes the hydrolysis of nucleoside triphosphates to their monophosphate derivatives, with a high preference for the non-canonical purine nucleotides XTP (xanthosine triphosphate), dITP (deoxyinosine triphosphate) and ITP. Seems to function as a house-cleaning enzyme that removes non-canonical purine nucleotides from the nucleotide pool, thus preventing their incorporation into DNA/RNA and avoiding chromosomal lesions. The sequence is that of dITP/XTP pyrophosphatase from Bordetella bronchiseptica (strain ATCC BAA-588 / NCTC 13252 / RB50) (Alcaligenes bronchisepticus).